The following is a 382-amino-acid chain: UDP-N-acetylglucosamine--N-acetylmuramyl-(pentapeptide) pyrophosphoryl-undecaprenol N-acetylglucosamine transferase (382 aa).

UDP-N-acetyl-alpha-D-glucosamine-binding positions include 11 to 13 (TGG), N124, R164, S192, and Q314.

Belongs to the glycosyltransferase 28 family. MurG subfamily.

It is found in the cell membrane. It catalyses the reaction di-trans,octa-cis-undecaprenyl diphospho-N-acetyl-alpha-D-muramoyl-L-alanyl-D-glutamyl-meso-2,6-diaminopimeloyl-D-alanyl-D-alanine + UDP-N-acetyl-alpha-D-glucosamine = di-trans,octa-cis-undecaprenyl diphospho-[N-acetyl-alpha-D-glucosaminyl-(1-&gt;4)]-N-acetyl-alpha-D-muramoyl-L-alanyl-D-glutamyl-meso-2,6-diaminopimeloyl-D-alanyl-D-alanine + UDP + H(+). It functions in the pathway cell wall biogenesis; peptidoglycan biosynthesis. Its function is as follows. Cell wall formation. Catalyzes the transfer of a GlcNAc subunit on undecaprenyl-pyrophosphoryl-MurNAc-pentapeptide (lipid intermediate I) to form undecaprenyl-pyrophosphoryl-MurNAc-(pentapeptide)GlcNAc (lipid intermediate II). The chain is UDP-N-acetylglucosamine--N-acetylmuramyl-(pentapeptide) pyrophosphoryl-undecaprenol N-acetylglucosamine transferase from Deinococcus deserti (strain DSM 17065 / CIP 109153 / LMG 22923 / VCD115).